A 932-amino-acid polypeptide reads, in one-letter code: Lipoxygenase 2.2, chloroplastic (932 aa).

Residues 79–219 enclose the PLAT domain; sequence MKATVSVHMK…CSPDKRTFFP (141 aa). The region spanning 223-932 is the Lipoxygenase domain; that stretch reads SYIPSQTPKG…EMGIPNSISI (710 aa). Positions 270–284 are enriched in basic and acidic residues; the sequence is PESKRPVLGGKEHPY. A disordered region spans residues 270–311; that stretch reads PESKRPVLGGKEHPYPRRCRTGRPRSKTDPSSEEESHKKGEM. Residues 285 to 294 show a composition bias toward basic residues; sequence PRRCRTGRPR. Positions 295–311 are enriched in basic and acidic residues; the sequence is SKTDPSSEEESHKKGEM. His-588, His-593, His-778, Asn-782, and Ile-932 together coordinate Fe cation.

Belongs to the lipoxygenase family. The cofactor is Fe cation.

It is found in the plastid. The protein localises to the chloroplast. The catalysed reaction is (9Z,12Z)-octadecadienoate + O2 = (13S)-hydroperoxy-(9Z,11E)-octadecadienoate. The enzyme catalyses (9Z,12Z,15Z)-octadecatrienoate + O2 = (13S)-hydroperoxy-(9Z,11E,15Z)-octadecatrienoate. Its pathway is lipid metabolism; oxylipin biosynthesis. Plant lipoxygenase may be involved in a number of diverse aspects of plant physiology including growth and development, pest resistance, and senescence or responses to wounding. This enzyme exhibits linoleate 13-lipoxygenase activity. The protein is Lipoxygenase 2.2, chloroplastic (LOX2.2) of Hordeum vulgare (Barley).